The primary structure comprises 598 residues: NADPH-dependent diflavin oxidoreductase 1 (598 aa).

The Flavodoxin-like domain occupies 6 to 150 (LLVLFGSQTG…AIDPWVGDLW (145 aa)). Residues 12-17 (SQTGTA), 59-62 (ATTG), 97-106 (LGDSSYAKFN), and D132 each bind FMN. Positions 206–448 (LQPFLAPVIT…VRPGSLVFPK (243 aa)) constitute an FAD-binding FR-type domain. Residues R350, 382–385 (RAFS), and 416–419 (GLCS) contribute to the FAD site. NADP(+) contacts are provided by residues T461, 516-517 (SR), 522-526 (KVYVQ), and D559. W597 contributes to the FAD binding site.

The protein belongs to the NADPH-dependent diflavin oxidoreductase NDOR1 family. In the N-terminal section; belongs to the flavodoxin family. This sequence in the C-terminal section; belongs to the flavoprotein pyridine nucleotide cytochrome reductase family. As to quaternary structure, interacts with CIAPIN1; as part of the cytosolic iron-sulfur (Fe-S) protein assembly (CIA) machinery. Interacts with DCPS. It depends on FAD as a cofactor. FMN serves as cofactor.

Its subcellular location is the cytoplasm. The protein resides in the perinuclear region. It catalyses the reaction 2 oxidized [2Fe-2S]-[protein] + NADPH = 2 reduced [2Fe-2S]-[protein] + NADP(+) + H(+). Functionally, NADPH-dependent reductase which is a central component of the cytosolic iron-sulfur (Fe-S) protein assembly (CIA) machinery. Transfers electrons from NADPH via its FAD and FMN prosthetic groups to the [2Fe-2S] cluster of CIAPIN1, another key component of the CIA machinery. In turn, this reduced cluster provides electrons for assembly of cytosolic iron-sulfur cluster proteins. It can also reduce the [2Fe-2S] cluster of CISD1 and activate this protein implicated in Fe/S cluster repair. In vitro can fully activate methionine synthase/MTR in the presence of soluble cytochrome b5/CYB5A. The protein is NADPH-dependent diflavin oxidoreductase 1 of Mus musculus (Mouse).